Consider the following 189-residue polypeptide: Dual specificity phosphatase 21 (189 aa).

A Tyrosine-protein phosphatase domain is found at 20 to 161 (GLSQITASLF…LIHYEFKLFS (142 aa)). The segment at 43 to 128 (SNNHITTIIN…YLMKYHNMTL (86 aa)) is sufficient for mitochondrial localization. The Phosphocysteine intermediate role is filled by Cys-105.

Belongs to the protein-tyrosine phosphatase family. Non-receptor class dual specificity subfamily. In terms of assembly, microtubule inner protein component of sperm flagellar doublet microtubules. As to expression, selectively expressed in testis.

Its subcellular location is the cytoplasm. It localises to the nucleus. The protein localises to the mitochondrion inner membrane. The protein resides in the cytoskeleton. It is found in the flagellum axoneme. It catalyses the reaction O-phospho-L-tyrosyl-[protein] + H2O = L-tyrosyl-[protein] + phosphate. It carries out the reaction O-phospho-L-seryl-[protein] + H2O = L-seryl-[protein] + phosphate. The enzyme catalyses O-phospho-L-threonyl-[protein] + H2O = L-threonyl-[protein] + phosphate. In terms of biological role, protein phosphatase component of the sperm flagellar doublet microtubules. May act as a regulator of sperm motility by mediating dephosphorylation of sperm doublet microtubule proteins. Can dephosphorylate single and diphosphorylated synthetic MAPK peptides, with preference for the phosphotyrosine and diphosphorylated forms over phosphothreonine. The protein is Dual specificity phosphatase 21 of Mus musculus (Mouse).